A 92-amino-acid polypeptide reads, in one-letter code: DNA-directed RNA polymerase subunit Rpo11 (92 aa).

The protein belongs to the archaeal Rpo11/eukaryotic RPB11/RPC19 RNA polymerase subunit family. In terms of assembly, part of the 13-subunit RNA polymerase complex.

Its subcellular location is the cytoplasm. The catalysed reaction is RNA(n) + a ribonucleoside 5'-triphosphate = RNA(n+1) + diphosphate. In terms of biological role, DNA-dependent RNA polymerase (RNAP) catalyzes the transcription of DNA into RNA using the four ribonucleoside triphosphates as substrates. This chain is DNA-directed RNA polymerase subunit Rpo11, found in Saccharolobus shibatae (strain ATCC 51178 / DSM 5389 / JCM 8931 / NBRC 15437 / B12) (Sulfolobus shibatae).